Here is a 111-residue protein sequence, read N- to C-terminus: Large ribosomal subunit protein uL22 (111 aa).

This sequence belongs to the universal ribosomal protein uL22 family. Part of the 50S ribosomal subunit.

Its function is as follows. This protein binds specifically to 23S rRNA; its binding is stimulated by other ribosomal proteins, e.g. L4, L17, and L20. It is important during the early stages of 50S assembly. It makes multiple contacts with different domains of the 23S rRNA in the assembled 50S subunit and ribosome. In terms of biological role, the globular domain of the protein is located near the polypeptide exit tunnel on the outside of the subunit, while an extended beta-hairpin is found that lines the wall of the exit tunnel in the center of the 70S ribosome. This chain is Large ribosomal subunit protein uL22, found in Chlamydia caviae (strain ATCC VR-813 / DSM 19441 / 03DC25 / GPIC) (Chlamydophila caviae).